A 103-amino-acid chain; its full sequence is Large ribosomal subunit protein bL21 (103 aa).

It belongs to the bacterial ribosomal protein bL21 family. In terms of assembly, part of the 50S ribosomal subunit. Contacts protein L20.

This protein binds to 23S rRNA in the presence of protein L20. The protein is Large ribosomal subunit protein bL21 of Aeromonas salmonicida (strain A449).